The chain runs to 456 residues: Major facilitator superfamily domain-containing protein 10 (456 aa).

The next 3 membrane-spanning stretches (helical) occupy residues 25–45, 87–107, and 114–136; these read VIIV…LLLP, VLFG…SAPL, and YLGR…AVWA. Asparagine 159 carries N-linked (GlcNAc...) asparagine glycosylation. Transmembrane regions (helical) follow at residues 179 to 199, 203 to 223, 278 to 298, 311 to 328, 345 to 365, 366 to 386, 403 to 423, and 424 to 444; these read AVIG…GAFL, MVPW…FCFL, LVYF…SFLA, KMFF…GTYA, LLLV…TLGL, GLML…TMVS, SLGA…YWLT, and GAQV…LLLW.

This sequence belongs to the major facilitator superfamily. As to expression, esxpressed in luminal membrane of renal tubules. Expressed at the surface of eosinophils (at protein level).

It is found in the nucleus inner membrane. Its subcellular location is the cell membrane. Functionally, probable organic anion transporter which may serve as a transporter for some non-steroidal anti-inflammatory drugs (NSAIDs) as well as other organic anions across the luminal membranes of renal proximal tubules at the final excretion step into the urine. The sequence is that of Major facilitator superfamily domain-containing protein 10 (Mfsd10) from Mus musculus (Mouse).